The sequence spans 180 residues: ATP synthase subunit delta (180 aa).

It belongs to the ATPase delta chain family. F-type ATPases have 2 components, F(1) - the catalytic core - and F(0) - the membrane proton channel. F(1) has five subunits: alpha(3), beta(3), gamma(1), delta(1), epsilon(1). F(0) has three main subunits: a(1), b(2) and c(10-14). The alpha and beta chains form an alternating ring which encloses part of the gamma chain. F(1) is attached to F(0) by a central stalk formed by the gamma and epsilon chains, while a peripheral stalk is formed by the delta and b chains.

It is found in the cell inner membrane. F(1)F(0) ATP synthase produces ATP from ADP in the presence of a proton or sodium gradient. F-type ATPases consist of two structural domains, F(1) containing the extramembraneous catalytic core and F(0) containing the membrane proton channel, linked together by a central stalk and a peripheral stalk. During catalysis, ATP synthesis in the catalytic domain of F(1) is coupled via a rotary mechanism of the central stalk subunits to proton translocation. Functionally, this protein is part of the stalk that links CF(0) to CF(1). It either transmits conformational changes from CF(0) to CF(1) or is implicated in proton conduction. The sequence is that of ATP synthase subunit delta from Legionella pneumophila (strain Paris).